The following is a 543-amino-acid chain: Exodeoxyribonuclease 7 large subunit (543 aa).

The disordered stretch occupies residues 498-543 (VTGEGDKASPPPQAASATTTPAPGRPNPLPKSPKKSEPPAGQGSLF).

This sequence belongs to the XseA family. Heterooligomer composed of large and small subunits.

It localises to the cytoplasm. The catalysed reaction is Exonucleolytic cleavage in either 5'- to 3'- or 3'- to 5'-direction to yield nucleoside 5'-phosphates.. In terms of biological role, bidirectionally degrades single-stranded DNA into large acid-insoluble oligonucleotides, which are then degraded further into small acid-soluble oligonucleotides. The protein is Exodeoxyribonuclease 7 large subunit of Allorhizobium ampelinum (strain ATCC BAA-846 / DSM 112012 / S4) (Agrobacterium vitis (strain S4)).